A 122-amino-acid chain; its full sequence is Large ribosomal subunit protein uL14 (122 aa).

The protein belongs to the universal ribosomal protein uL14 family. Part of the 50S ribosomal subunit. Forms a cluster with proteins L3 and L19. In the 70S ribosome, L14 and L19 interact and together make contacts with the 16S rRNA in bridges B5 and B8.

In terms of biological role, binds to 23S rRNA. Forms part of two intersubunit bridges in the 70S ribosome. The polypeptide is Large ribosomal subunit protein uL14 (Streptococcus uberis (strain ATCC BAA-854 / 0140J)).